The following is a 423-amino-acid chain: Gamma-glutamyl phosphate reductase (423 aa).

This sequence belongs to the gamma-glutamyl phosphate reductase family.

It localises to the cytoplasm. The enzyme catalyses L-glutamate 5-semialdehyde + phosphate + NADP(+) = L-glutamyl 5-phosphate + NADPH + H(+). It participates in amino-acid biosynthesis; L-proline biosynthesis; L-glutamate 5-semialdehyde from L-glutamate: step 2/2. In terms of biological role, catalyzes the NADPH-dependent reduction of L-glutamate 5-phosphate into L-glutamate 5-semialdehyde and phosphate. The product spontaneously undergoes cyclization to form 1-pyrroline-5-carboxylate. The protein is Gamma-glutamyl phosphate reductase of Paraburkholderia xenovorans (strain LB400).